The sequence spans 486 residues: Nucleolar protein 56 (486 aa).

Residues 298–416 (CAPSLSALIG…VEDRLEYFTS (119 aa)) enclose the Nop domain. Residues 450-486 (KKAKRLAEESVTATAEAEVDEDAPKPKKKKKSKAGDE) are disordered. Residues 475–486 (PKKKKKSKAGDE) are compositionally biased toward basic residues.

The protein belongs to the NOP5/NOP56 family.

The protein localises to the nucleus. The protein resides in the nucleolus. Functionally, required for 60S ribosomal subunit synthesis. This is Nucleolar protein 56 from Caenorhabditis elegans.